A 525-amino-acid chain; its full sequence is GMP synthase [glutamine-hydrolyzing] (525 aa).

In terms of domain architecture, Glutamine amidotransferase type-1 spans 16–205 (PVLVVDFGAQ…LHDFAGLGAQ (190 aa)). C93 functions as the Nucleophile in the catalytic mechanism. Residues H179 and E181 contribute to the active site. Residues 206–399 (WTPANIANAL…LGLPEEIVAR (194 aa)) enclose the GMPS ATP-PPase domain. 233–239 (SGGVDSA) provides a ligand contact to ATP.

Homodimer.

It carries out the reaction XMP + L-glutamine + ATP + H2O = GMP + L-glutamate + AMP + diphosphate + 2 H(+). It participates in purine metabolism; GMP biosynthesis; GMP from XMP (L-Gln route): step 1/1. Catalyzes the synthesis of GMP from XMP. The chain is GMP synthase [glutamine-hydrolyzing] from Mycobacterium bovis (strain BCG / Pasteur 1173P2).